Reading from the N-terminus, the 202-residue chain is Small ribosomal subunit protein uS4 (202 aa).

Residues 23–42 (RKAARRSYPPGQHGQARRKR) are disordered. The region spanning 90–154 (MRLDNLVFRL…SRKLVTANLE (65 aa)) is the S4 RNA-binding domain.

The protein belongs to the universal ribosomal protein uS4 family. As to quaternary structure, part of the 30S ribosomal subunit. Contacts protein S5. The interaction surface between S4 and S5 is involved in control of translational fidelity.

One of the primary rRNA binding proteins, it binds directly to 16S rRNA where it nucleates assembly of the body of the 30S subunit. Its function is as follows. With S5 and S12 plays an important role in translational accuracy. This chain is Small ribosomal subunit protein uS4, found in Synechococcus elongatus (strain ATCC 33912 / PCC 7942 / FACHB-805) (Anacystis nidulans R2).